Here is a 347-residue protein sequence, read N- to C-terminus: 4-hydroxy-2-oxovalerate aldolase 1 (347 aa).

The Pyruvate carboxyltransferase domain occupies 11 to 263 (VVLHDMCLRD…ETGVDLFKLM (253 aa)). 19 to 20 (RD) provides a ligand contact to substrate. Residue Asp20 coordinates Mn(2+). Residue His23 is the Proton acceptor of the active site. Positions 173 and 202 each coordinate substrate. Mn(2+)-binding residues include His202 and His204. Position 293 (Tyr293) interacts with substrate.

The protein belongs to the 4-hydroxy-2-oxovalerate aldolase family.

The catalysed reaction is (S)-4-hydroxy-2-oxopentanoate = acetaldehyde + pyruvate. The sequence is that of 4-hydroxy-2-oxovalerate aldolase 1 (lapG) from Azoarcus sp. (strain BH72).